Reading from the N-terminus, the 391-residue chain is S-adenosylmethionine synthase 1 (391 aa).

Glutamate 9 provides a ligand contact to Mg(2+). Residue histidine 15 coordinates ATP. Glutamate 43 lines the K(+) pocket. 2 residues coordinate L-methionine: glutamate 56 and glutamine 99. ATP-binding positions include 167–169 (DGK), 235–238 (SGRF), aspartate 246, 252–253 (RK), alanine 269, lysine 273, and lysine 277. Aspartate 246 lines the L-methionine pocket. Lysine 277 provides a ligand contact to L-methionine.

This sequence belongs to the AdoMet synthase family. In terms of assembly, homotetramer. It depends on Mn(2+) as a cofactor. Mg(2+) is required as a cofactor. Co(2+) serves as cofactor. The cofactor is K(+).

Its subcellular location is the cytoplasm. It catalyses the reaction L-methionine + ATP + H2O = S-adenosyl-L-methionine + phosphate + diphosphate. Its pathway is amino-acid biosynthesis; S-adenosyl-L-methionine biosynthesis; S-adenosyl-L-methionine from L-methionine: step 1/1. Functionally, catalyzes the formation of S-adenosylmethionine from methionine and ATP. The reaction comprises two steps that are both catalyzed by the same enzyme: formation of S-adenosylmethionine (AdoMet) and triphosphate, and subsequent hydrolysis of the triphosphate. The polypeptide is S-adenosylmethionine synthase 1 (METK1) (Vitis vinifera (Grape)).